Consider the following 437-residue polypeptide: Tol-Pal system protein TolB (437 aa).

An N-terminal signal peptide occupies residues 1 to 30; that stretch reads MLPTPSRSHKLSGYAAVLFFLWLVCSPAQA. Positions 410–423 are enriched in polar residues; sequence SDGRTRQQLSTQTG. A disordered region spans residues 410-437; it reads SDGRTRQQLSTQTGDIREPAWGPLRRLQ.

The protein belongs to the TolB family. As to quaternary structure, the Tol-Pal system is composed of five core proteins: the inner membrane proteins TolA, TolQ and TolR, the periplasmic protein TolB and the outer membrane protein Pal. They form a network linking the inner and outer membranes and the peptidoglycan layer.

It localises to the periplasm. In terms of biological role, part of the Tol-Pal system, which plays a role in outer membrane invagination during cell division and is important for maintaining outer membrane integrity. The chain is Tol-Pal system protein TolB from Nitrosospira multiformis (strain ATCC 25196 / NCIMB 11849 / C 71).